A 200-amino-acid polypeptide reads, in one-letter code: Large ribosomal subunit protein uL4 (200 aa).

A disordered region spans residues 43 to 70 (RAQKTRAEVSGSGKKPWRQKGTGRARSG).

This sequence belongs to the universal ribosomal protein uL4 family. In terms of assembly, part of the 50S ribosomal subunit.

One of the primary rRNA binding proteins, this protein initially binds near the 5'-end of the 23S rRNA. It is important during the early stages of 50S assembly. It makes multiple contacts with different domains of the 23S rRNA in the assembled 50S subunit and ribosome. Its function is as follows. Forms part of the polypeptide exit tunnel. The sequence is that of Large ribosomal subunit protein uL4 from Glaesserella parasuis serovar 5 (strain SH0165) (Haemophilus parasuis).